A 702-amino-acid polypeptide reads, in one-letter code: Exodeoxyribonuclease 1 (702 aa).

The tract at residues 1–96 (MGIQGLLPQL…STESKRRDKR (96 aa)) is N-domain. Residues aspartate 30, aspartate 78, glutamate 150, aspartate 152, aspartate 171, aspartate 173, and aspartate 227 each coordinate Mg(2+). Residues 114 to 247 (NAMDYFQKCV…ITAMKLVRRF (134 aa)) form an I-domain region. The residue at position 372 (serine 372) is a Phosphoserine. Disordered stretches follow at residues 465–571 (SIQD…SQRS) and 660–685 (SFNS…SQAR). Positions 474-498 (NSQSLEEPVSESQLSTQIPSSFITT) are enriched in polar residues. Acidic residues-rich tracts occupy residues 500–518 (LEDD…SDIE) and 535–550 (NTDD…DYSE). A compositionally biased stretch (low complexity) spans 558–571 (TSSTTSFPGSSQRS). A compositionally biased stretch (basic and acidic residues) spans 667 to 678 (LHEESKKRDIET).

The protein belongs to the XPG/RAD2 endonuclease family. EXO1 subfamily. As to quaternary structure, interacts with mismatch repair protein MSH2. It depends on Mg(2+) as a cofactor.

It localises to the nucleus. Inactivated by calcium and zinc ions. Its function is as follows. 5'-&gt;3' double-stranded DNA exonuclease involved in mismatch repair and eventually also in mitotic recombination between direct repeats. Also has a minor role in the correction of large DNA mismatches that occur in the heteroduplex DNA during meiotic recombination at the HIS4 locus. This Saccharomyces cerevisiae (strain ATCC 204508 / S288c) (Baker's yeast) protein is Exodeoxyribonuclease 1 (EXO1).